Consider the following 491-residue polypeptide: Cytochrome P450 2F1 (491 aa).

Cysteine 436 provides a ligand contact to heme.

Belongs to the cytochrome P450 family. Heme is required as a cofactor. Expressed in lung. Rarely detected in liver and placenta.

It localises to the endoplasmic reticulum membrane. Its subcellular location is the microsome membrane. It carries out the reaction an organic molecule + reduced [NADPH--hemoprotein reductase] + O2 = an alcohol + oxidized [NADPH--hemoprotein reductase] + H2O + H(+). Functionally, may be involved in the metabolism of various pneumotoxicants including naphthalene. Is able to dealkylate ethoxycoumarin, propoxycoumarin, and pentoxyresorufin but possesses no activity toward ethoxyresorufin and only trace dearylation activity toward benzyloxyresorufin. Bioactivates 3-methylindole (3MI) by dehydrogenation to the putative electrophile 3-methylene-indolenine. This chain is Cytochrome P450 2F1 (CYP2F1), found in Homo sapiens (Human).